The primary structure comprises 349 residues: Glycerol-3-phosphate dehydrogenase [NAD(+)], cytoplasmic (349 aa).

NAD(+) is bound by residues 10-15 (GSGDWG), lysine 120, and alanine 153. Residue lysine 120 participates in substrate binding. A Phosphoserine modification is found at serine 154. The Proton acceptor role is filled by lysine 204. Arginine 269 is an NAD(+) binding site. Position 269 to 270 (269 to 270 (RN)) interacts with substrate. N6-succinyllysine is present on lysine 289. Lysine 296 and glutamine 298 together coordinate NAD(+). Tyrosine 326 bears the Phosphotyrosine mark.

This sequence belongs to the NAD-dependent glycerol-3-phosphate dehydrogenase family. As to quaternary structure, homodimer.

Its subcellular location is the cytoplasm. It catalyses the reaction sn-glycerol 3-phosphate + NAD(+) = dihydroxyacetone phosphate + NADH + H(+). In terms of biological role, has glycerol-3-phosphate dehydrogenase activity. The chain is Glycerol-3-phosphate dehydrogenase [NAD(+)], cytoplasmic (GPD1) from Oryctolagus cuniculus (Rabbit).